A 406-amino-acid polypeptide reads, in one-letter code: Cysteine desulfurase (406 aa).

K226 is modified (N6-(pyridoxal phosphate)lysine). The active-site Cysteine persulfide intermediate is the C364.

The protein belongs to the class-V pyridoxal-phosphate-dependent aminotransferase family. Csd subfamily. As to quaternary structure, homodimer. Interacts with SufE and the SufBCD complex composed of SufB, SufC and SufD. The interaction with SufE is required to mediate the direct transfer of the sulfur atom from the S-sulfanylcysteine. Pyridoxal 5'-phosphate serves as cofactor.

It is found in the cytoplasm. It catalyses the reaction (sulfur carrier)-H + L-cysteine = (sulfur carrier)-SH + L-alanine. The enzyme catalyses L-selenocysteine + AH2 = hydrogenselenide + L-alanine + A + H(+). Its pathway is cofactor biosynthesis; iron-sulfur cluster biosynthesis. Its function is as follows. Cysteine desulfurases mobilize the sulfur from L-cysteine to yield L-alanine, an essential step in sulfur metabolism for biosynthesis of a variety of sulfur-containing biomolecules. Component of the suf operon, which is activated and required under specific conditions such as oxidative stress and iron limitation. Acts as a potent selenocysteine lyase in vitro, that mobilizes selenium from L-selenocysteine. Selenocysteine lyase activity is however unsure in vivo. The chain is Cysteine desulfurase from Salmonella dublin (strain CT_02021853).